Consider the following 212-residue polypeptide: NADH dehydrogenase [ubiquinone] iron-sulfur protein 8, mitochondrial (212 aa).

The N-terminal 34 residues, 1–34, are a transit peptide targeting the mitochondrion; that stretch reads MYRLSSSMLPRALAQAMRTGHLNGQSLHSSAVAA. 4Fe-4S ferredoxin-type domains follow at residues 104-133 and 143-172; these read RRYP…IEAE and TRYD…EGPN. Residues C113, C116, C119, C123, C152, C155, C158, and C162 each contribute to the [4Fe-4S] cluster site.

This sequence belongs to the complex I 23 kDa subunit family. As to quaternary structure, complex I is composed of 45 different subunits. This is a component of the iron-sulfur (IP) fragment of the enzyme. Interacts with RAB5IF. Requires [4Fe-4S] cluster as cofactor.

It is found in the mitochondrion inner membrane. It catalyses the reaction a ubiquinone + NADH + 5 H(+)(in) = a ubiquinol + NAD(+) + 4 H(+)(out). Its function is as follows. Core subunit of the mitochondrial membrane respiratory chain NADH dehydrogenase (Complex I) which catalyzes electron transfer from NADH through the respiratory chain, using ubiquinone as an electron acceptor. Essential for the catalytic activity and assembly of complex I. In Mus musculus (Mouse), this protein is NADH dehydrogenase [ubiquinone] iron-sulfur protein 8, mitochondrial (Ndufs8).